A 485-amino-acid polypeptide reads, in one-letter code: Aldehyde dehydrogenase family 3 member A2 (485 aa).

At 1 to 463 (MELEVRRVRQ…FLLKRFNKEK (463 aa)) the chain is on the cytoplasmic side. Residue 185-190 (GNTAVG) participates in NAD(+) binding. Residues Glu-207 and Cys-241 contribute to the active site. Ser-293 is modified (phosphoserine). A helical transmembrane segment spans residues 464-484 (LGLLLLTFLGIVAAVLVKAEY). A Prevents secretion from ER motif is present at residues 481 to 484 (KAEY).

It belongs to the aldehyde dehydrogenase family. Homodimer.

It is found in the microsome membrane. The protein resides in the endoplasmic reticulum membrane. It catalyses the reaction an aldehyde + NAD(+) + H2O = a carboxylate + NADH + 2 H(+). The catalysed reaction is a fatty aldehyde + NAD(+) + H2O = a fatty acid + NADH + 2 H(+). The enzyme catalyses (2E)-hexadecenal + NAD(+) + H2O = (E)-hexadec-2-enoate + NADH + 2 H(+). It carries out the reaction hexadecanoate + NADH + 2 H(+) = hexadecanal + NAD(+) + H2O. It catalyses the reaction 22-oxodocosanoate + NAD(+) + H2O = docosanedioate + NADH + 2 H(+). The catalysed reaction is 2,6,10,14-tetramethylpentadecanal + NAD(+) + H2O = 2,6,10,14-tetramethylpentadecanoate + NADH + 2 H(+). The enzyme catalyses octadecanal + NAD(+) + H2O = octadecanoate + NADH + 2 H(+). It carries out the reaction dodecanoate + NADH + 2 H(+) = dodecanal + NAD(+) + H2O. It catalyses the reaction decanal + NAD(+) + H2O = decanoate + NADH + 2 H(+). The catalysed reaction is tetradecanal + NAD(+) + H2O = tetradecanoate + NADH + 2 H(+). The enzyme catalyses octanal + NAD(+) + H2O = octanoate + NADH + 2 H(+). It carries out the reaction heptanal + NAD(+) + H2O = heptanoate + NADH + 2 H(+). It catalyses the reaction (2E,6E)-farnesal + NAD(+) + H2O = (2E,6E)-farnesoate + NADH + 2 H(+). In terms of biological role, catalyzes the oxidation of medium and long-chain aliphatic aldehydes to fatty acids. Active on a variety of saturated and unsaturated aliphatic aldehydes between 6 and 24 carbons in length. Responsible for conversion of the sphingosine 1-phosphate (S1P) degradation product hexadecenal to hexadecenoic acid. The sequence is that of Aldehyde dehydrogenase family 3 member A2 (ALDH3A2) from Pongo abelii (Sumatran orangutan).